The primary structure comprises 256 residues: Probable sulfite/organosulfonate exporter TauE (256 aa).

8 consecutive transmembrane segments (helical) span residues 5–25, 33–53, 76–96, 103–123, 142–162, 172–190, 199–219, and 236–256; these read LLLP…FQTV, IVMG…AAVV, AVAA…LVLE, ATLL…SAAL, VFGG…IFQF, IRCA…RTLF, AAVC…TLLG, and FGVL…AWVL.

It belongs to the 4-toluene sulfonate uptake permease (TSUP) (TC 2.A.102) family.

It localises to the cell inner membrane. Could be a sulfite/organosulfonate exporter with a wide substrate range, including 3-sulfolactate and 3-sulfopyruvate. The polypeptide is Probable sulfite/organosulfonate exporter TauE (Cupriavidus necator (strain ATCC 17699 / DSM 428 / KCTC 22496 / NCIMB 10442 / H16 / Stanier 337) (Ralstonia eutropha)).